The following is a 189-amino-acid chain: GMP synthase [glutamine-hydrolyzing] subunit A (189 aa).

The Glutamine amidotransferase type-1 domain maps to Arg3–Ala187. The active-site Nucleophile is the Cys73. Residues His161 and Glu163 contribute to the active site.

In terms of assembly, heterodimer composed of a glutamine amidotransferase subunit (A) and a GMP-binding subunit (B).

The catalysed reaction is XMP + L-glutamine + ATP + H2O = GMP + L-glutamate + AMP + diphosphate + 2 H(+). It functions in the pathway purine metabolism; GMP biosynthesis; GMP from XMP (L-Gln route): step 1/1. In terms of biological role, catalyzes the synthesis of GMP from XMP. The protein is GMP synthase [glutamine-hydrolyzing] subunit A of Haloarcula marismortui (strain ATCC 43049 / DSM 3752 / JCM 8966 / VKM B-1809) (Halobacterium marismortui).